Here is a 358-residue protein sequence, read N- to C-terminus: Protein-L-isoaspartate O-methyltransferase domain-containing protein 1 (358 aa).

A lipid anchor (N-myristoyl glycine) is attached at Gly-2. The active site involves Ser-64. AdoMet binding motif stretches follow at residues 85 to 94 (LNLGSGTGYL), 160 to 164 (YDRIY), and 181 to 191 (LKVGGILVMPI). The segment at 240–250 (VRNLQDLARIY) is BC-box. The tract at residues 300-339 (PLDSEEDERMEDDNKEEEDKDHSEALKPEEPPRNLLREKI) is disordered. Residues 302-318 (DSEEDERMEDDNKEEED) show a composition bias toward acidic residues. Residues 319 to 339 (KDHSEALKPEEPPRNLLREKI) are compositionally biased toward basic and acidic residues. Positions 342-345 (LPLP) are CUL-box.

This sequence belongs to the methyltransferase superfamily. L-isoaspartyl/D-aspartyl protein methyltransferase family. In terms of assembly, component of the probable ECS(PCMTD1) E3 ubiquitin-protein ligase complex, at least composed of CUL5, ELOB, ELOC, RBX2 and PCMTD1.

Its subcellular location is the cytoplasm. The protein resides in the membrane. Its function is as follows. Substrate recognition component of an ECS (Elongin BC-CUL5-SOCS-box protein) E3 ubiquitin ligase complex which mediates the ubiquitination and subsequent proteasomal degradation of target proteins. Specifically binds to the methyltransferase cofactor S-adenosylmethionine (AdoMet) via the N-terminal AdoMet binding motif, but does not display methyltransferase activity. May provide an alternate maintenance pathway for modified proteins by acting as a damage-specific E3 ubiquitin ligase adaptor protein. The sequence is that of Protein-L-isoaspartate O-methyltransferase domain-containing protein 1 (PCMTD1) from Gallus gallus (Chicken).